The chain runs to 436 residues: Elongation factor 1-alpha (436 aa).

The tr-type G domain occupies 8 to 232 (KPHLNMIVTG…DDFKMAEKPV (225 aa)). The G1 stretch occupies residues 17 to 24 (GHIDNGKS). Residue 17–24 (GHIDNGKS) coordinates GTP. Residue Ser24 coordinates Mg(2+). Residues 74–78 (GITID) are G2. The G3 stretch occupies residues 95–98 (DAPG). GTP-binding positions include 95–99 (DAPGH) and 157–160 (NKMD). Residues 157–160 (NKMD) form a G4 region. Residues 196-198 (SGW) are G5.

This sequence belongs to the TRAFAC class translation factor GTPase superfamily. Classic translation factor GTPase family. EF-Tu/EF-1A subfamily.

Its subcellular location is the cytoplasm. It catalyses the reaction GTP + H2O = GDP + phosphate + H(+). Functionally, GTP hydrolase that promotes the GTP-dependent binding of aminoacyl-tRNA to the A-site of ribosomes during protein biosynthesis. This is Elongation factor 1-alpha from Cenarchaeum symbiosum (strain A).